The sequence spans 416 residues: Probable mannose-6-phosphate isomerase (416 aa).

Zn(2+) contacts are provided by Q99, H101, E126, and H259. The active site involves R278.

Belongs to the mannose-6-phosphate isomerase type 1 family. It depends on Zn(2+) as a cofactor.

The protein resides in the cytoplasm. The catalysed reaction is D-mannose 6-phosphate = D-fructose 6-phosphate. The protein operates within nucleotide-sugar biosynthesis; GDP-alpha-D-mannose biosynthesis; alpha-D-mannose 1-phosphate from D-fructose 6-phosphate: step 1/2. Involved in the synthesis of the GDP-mannose and dolichol-phosphate-mannose required for a number of critical mannosyl transfer reactions. The chain is Probable mannose-6-phosphate isomerase from Caenorhabditis elegans.